The following is a 127-amino-acid chain: Aspartate 1-decarboxylase (127 aa).

The Schiff-base intermediate with substrate; via pyruvic acid role is filled by serine 25. At serine 25 the chain carries Pyruvic acid (Ser). Substrate is bound at residue threonine 57. Tyrosine 58 functions as the Proton donor in the catalytic mechanism. Residue 73–75 (GAA) participates in substrate binding.

It belongs to the PanD family. Heterooctamer of four alpha and four beta subunits. The cofactor is pyruvate. In terms of processing, is synthesized initially as an inactive proenzyme, which is activated by self-cleavage at a specific serine bond to produce a beta-subunit with a hydroxyl group at its C-terminus and an alpha-subunit with a pyruvoyl group at its N-terminus.

Its subcellular location is the cytoplasm. The catalysed reaction is L-aspartate + H(+) = beta-alanine + CO2. The protein operates within cofactor biosynthesis; (R)-pantothenate biosynthesis; beta-alanine from L-aspartate: step 1/1. Its function is as follows. Catalyzes the pyruvoyl-dependent decarboxylation of aspartate to produce beta-alanine. In Clostridium botulinum (strain 657 / Type Ba4), this protein is Aspartate 1-decarboxylase.